The primary structure comprises 255 residues: Postacrosomal sheath WW domain-binding protein (255 aa).

Positions 15–87 (LIPNGESLLK…DLITNLTVEQ (73 aa)) constitute a GRAM domain. 7 tandem repeats follow at residues 139–145 (YGAPPAG), 146–152 (YGAPPAG), 153–159 (YGAPPPG), 160–166 (YGAPPAG), 167–173 (YGAPPPG), 174–180 (YGAPPAG), and 202–208 (YGAPPLG). The segment at 139-208 (YGAPPAGYGA…PAGYGAPPLG (70 aa)) is 6 X 7 AA tandem repeat of Y-G-X-P-P-X-G. The PPxY motif motif lies at 171-174 (PPGY). Disordered regions lie at residues 180–199 (GYGA…RASP) and 204–255 (APPL…ASSS).

Its function is as follows. May play a role in meiotic resumption and pronuclear formation, mediated by a WW domain-signaling pathway during fertilization. The sequence is that of Postacrosomal sheath WW domain-binding protein (WBP2NL) from Macaca fascicularis (Crab-eating macaque).